The chain runs to 699 residues: UvrABC system protein C (699 aa).

Residues 1–51 (MIQHPTDTPEVAADAAAEPERAAGAAGATPQPSQDAVEPAADVDAATASLA) show a composition bias toward low complexity. Positions 1-59 (MIQHPTDTPEVAADAAAEPERAAGAAGATPQPSQDAVEPAADVDAATASLAAEDDDEPV) are disordered. Positions 92–170 (TSPGVYRMLN…IKQLRPRFNV (79 aa)) constitute a GIY-YIG domain. The 36-residue stretch at 280–315 (RLVKQELAGEMEKASAELEFETAALYRDRLAALSAI) folds into the UVR domain.

Belongs to the UvrC family. As to quaternary structure, interacts with UvrB in an incision complex.

Its subcellular location is the cytoplasm. The UvrABC repair system catalyzes the recognition and processing of DNA lesions. UvrC both incises the 5' and 3' sides of the lesion. The N-terminal half is responsible for the 3' incision and the C-terminal half is responsible for the 5' incision. In Rhodopseudomonas palustris (strain BisB18), this protein is UvrABC system protein C.